We begin with the raw amino-acid sequence, 299 residues long: MKISVIISTYNCGALIVKALCSLVSNQTPACELEVLVIDDGSIDNTRQIIKKFQAKVSFTLKYFYKKNGNWGSVINYVKENRLANGDWITVLDSDDTLKPNTLNKLANLVEKADYDLVVFDYTKCWKKIKLKIHTYPTWWKNMTRELQKQTPFCIPLGKFLKRNLFYKLPKLKEKVSFQDALYTASSLKLAKKVRHVNQSGGNYHFKRAGNSMSIPWNIKRFSAELDICKDLIRLNAQEIALVHLLRQQFRVQLKEKQIQLAVTRDFNFSGFSWYTRCFLWMVYQTMLKRYFYLQTTKQ.

The protein belongs to the glycosyltransferase 2 family.

This is an uncharacterized protein from Mycoplasma pneumoniae (strain ATCC 29342 / M129 / Subtype 1) (Mycoplasmoides pneumoniae).